The primary structure comprises 379 residues: Putative glutamate--cysteine ligase 2 (379 aa).

The protein belongs to the glutamate--cysteine ligase type 2 family. YbdK subfamily.

The enzyme catalyses L-cysteine + L-glutamate + ATP = gamma-L-glutamyl-L-cysteine + ADP + phosphate + H(+). ATP-dependent carboxylate-amine ligase which exhibits weak glutamate--cysteine ligase activity. The sequence is that of Putative glutamate--cysteine ligase 2 from Roseiflexus sp. (strain RS-1).